Here is a 337-residue protein sequence, read N- to C-terminus: GTP 3',8-cyclase (337 aa).

The Radical SAM core domain occupies 17-243; it reads PFQRQYYYLR…HKSHTDGPAK (227 aa). Residue Arg26 coordinates GTP. Cys33 and Cys37 together coordinate [4Fe-4S] cluster. Tyr39 provides a ligand contact to S-adenosyl-L-methionine. Cys40 provides a ligand contact to [4Fe-4S] cluster. Arg76 is a binding site for GTP. S-adenosyl-L-methionine is bound at residue Gly80. Thr107 serves as a coordination point for GTP. Ser131 contributes to the S-adenosyl-L-methionine binding site. A GTP-binding site is contributed by Lys168. Met202 contributes to the S-adenosyl-L-methionine binding site. [4Fe-4S] cluster contacts are provided by Cys265 and Cys268. A GTP-binding site is contributed by 270–272; the sequence is RLR. Residue Cys282 coordinates [4Fe-4S] cluster.

This sequence belongs to the radical SAM superfamily. MoaA family. Monomer and homodimer. The cofactor is [4Fe-4S] cluster.

It catalyses the reaction GTP + AH2 + S-adenosyl-L-methionine = (8S)-3',8-cyclo-7,8-dihydroguanosine 5'-triphosphate + 5'-deoxyadenosine + L-methionine + A + H(+). It functions in the pathway cofactor biosynthesis; molybdopterin biosynthesis. In terms of biological role, catalyzes the cyclization of GTP to (8S)-3',8-cyclo-7,8-dihydroguanosine 5'-triphosphate. This chain is GTP 3',8-cyclase, found in Haemophilus influenzae (strain 86-028NP).